Here is a 105-residue protein sequence, read N- to C-terminus: MKQQKQKIRIRLKGFDQGQLDRSTADIVETAKRTGARVVGPIPLPTKREVYTVLRSPHVDKKSREQFEIRTHKRLVDILDPTGKTIDALKMLALPAGVDIKIKAA.

The protein belongs to the universal ribosomal protein uS10 family. As to quaternary structure, part of the 30S ribosomal subunit.

Its function is as follows. Involved in the binding of tRNA to the ribosomes. This chain is Small ribosomal subunit protein uS10, found in Chlamydia pneumoniae (Chlamydophila pneumoniae).